The following is a 177-amino-acid chain: Peptide methionine sulfoxide reductase MsrA (177 aa).

Residue cysteine 12 is part of the active site.

Belongs to the MsrA Met sulfoxide reductase family.

It carries out the reaction L-methionyl-[protein] + [thioredoxin]-disulfide + H2O = L-methionyl-(S)-S-oxide-[protein] + [thioredoxin]-dithiol. The enzyme catalyses [thioredoxin]-disulfide + L-methionine + H2O = L-methionine (S)-S-oxide + [thioredoxin]-dithiol. Has an important function as a repair enzyme for proteins that have been inactivated by oxidation. Catalyzes the reversible oxidation-reduction of methionine sulfoxide in proteins to methionine. In Halobacterium salinarum (strain ATCC 29341 / DSM 671 / R1), this protein is Peptide methionine sulfoxide reductase MsrA.